We begin with the raw amino-acid sequence, 172 residues long: 3-hydroxydecanoyl-[acyl-carrier-protein] dehydratase (172 aa).

Histidine 71 is an active-site residue.

The protein belongs to the thioester dehydratase family. FabA subfamily. Homodimer.

It is found in the cytoplasm. The catalysed reaction is a (3R)-hydroxyacyl-[ACP] = a (2E)-enoyl-[ACP] + H2O. The enzyme catalyses (3R)-hydroxydecanoyl-[ACP] = (2E)-decenoyl-[ACP] + H2O. It catalyses the reaction (2E)-decenoyl-[ACP] = (3Z)-decenoyl-[ACP]. The protein operates within lipid metabolism; fatty acid biosynthesis. Functionally, necessary for the introduction of cis unsaturation into fatty acids. Catalyzes the dehydration of (3R)-3-hydroxydecanoyl-ACP to E-(2)-decenoyl-ACP and then its isomerization to Z-(3)-decenoyl-ACP. Can catalyze the dehydratase reaction for beta-hydroxyacyl-ACPs with saturated chain lengths up to 16:0, being most active on intermediate chain length. The sequence is that of 3-hydroxydecanoyl-[acyl-carrier-protein] dehydratase from Salmonella choleraesuis (strain SC-B67).